We begin with the raw amino-acid sequence, 249 residues long: MILELDCGNSLIKWRVIDGGGGRSVAGGLADSDEALVEQLSLRRGLPVRACRLVSVRSEQETSQLIARLERLFPVSVLVAAPGRQLAGVRNGYLDYQRLGLDRWLALVAGHHLAQKACLVIDLGTAVTSDLVAANGTHLGGYICPGMSLMRSQLRTHTRRIRYDDTEARRAMGSLHPGQATAEAVERGCLLMLRGFVREQYAMACELLGADCEIFLTGGDAELVRDELARARIIPDLVFVGLALACPIE.

6 to 13 (DCGNSLIK) provides a ligand contact to ATP. Substrate-binding positions include Tyr-93 and 100-103 (GLDR). Asp-102 acts as the Proton acceptor in catalysis. Asp-122 lines the K(+) pocket. Thr-125 is an ATP binding site. Thr-181 provides a ligand contact to substrate.

This sequence belongs to the type III pantothenate kinase family. In terms of assembly, homodimer. NH4(+) serves as cofactor. It depends on K(+) as a cofactor.

Its subcellular location is the cytoplasm. It carries out the reaction (R)-pantothenate + ATP = (R)-4'-phosphopantothenate + ADP + H(+). It functions in the pathway cofactor biosynthesis; coenzyme A biosynthesis; CoA from (R)-pantothenate: step 1/5. In terms of biological role, catalyzes the phosphorylation of pantothenate (Pan), the first step in CoA biosynthesis. The polypeptide is Type III pantothenate kinase (Pseudomonas paraeruginosa (strain DSM 24068 / PA7) (Pseudomonas aeruginosa (strain PA7))).